We begin with the raw amino-acid sequence, 180 residues long: MANRLKEKYTNEVIPALTEQFNYSSVMAVPKVDKIVINMGVGEAVNNAKTLEKAAAELALISGQKPLITKAKKSIAGFRLREGVAIGAKVTLRGERMYEFLDKLVSVSLPRVRDFHGVPTKSFDGRGNYTLGVKEQLIFPEINFDNVDKVRGMDIVIVTTANTDEEGRELLKGLGMPFAK.

It belongs to the universal ribosomal protein uL5 family. Part of the 50S ribosomal subunit; part of the 5S rRNA/L5/L18/L25 subcomplex. Contacts the 5S rRNA and the P site tRNA. Forms a bridge to the 30S subunit in the 70S ribosome.

Functionally, this is one of the proteins that bind and probably mediate the attachment of the 5S RNA into the large ribosomal subunit, where it forms part of the central protuberance. In the 70S ribosome it contacts protein S13 of the 30S subunit (bridge B1b), connecting the 2 subunits; this bridge is implicated in subunit movement. Contacts the P site tRNA; the 5S rRNA and some of its associated proteins might help stabilize positioning of ribosome-bound tRNAs. The chain is Large ribosomal subunit protein uL5 from Streptococcus thermophilus (strain CNRZ 1066).